The primary structure comprises 253 residues: Triosephosphate isomerase (253 aa).

8–10 (NWK) contacts substrate. Residue His93 is the Electrophile of the active site. Catalysis depends on Glu165, which acts as the Proton acceptor. Residues Gly171, Ser210, and 231–232 (GG) each bind substrate.

It belongs to the triosephosphate isomerase family. As to quaternary structure, homodimer.

The protein localises to the cytoplasm. It catalyses the reaction D-glyceraldehyde 3-phosphate = dihydroxyacetone phosphate. Its pathway is carbohydrate biosynthesis; gluconeogenesis. The protein operates within carbohydrate degradation; glycolysis; D-glyceraldehyde 3-phosphate from glycerone phosphate: step 1/1. In terms of biological role, involved in the gluconeogenesis. Catalyzes stereospecifically the conversion of dihydroxyacetone phosphate (DHAP) to D-glyceraldehyde-3-phosphate (G3P). The sequence is that of Triosephosphate isomerase from Francisella philomiragia subsp. philomiragia (strain ATCC 25017 / CCUG 19701 / FSC 153 / O#319-036).